Reading from the N-terminus, the 257-residue chain is 3-methyl-2-oxobutanoate hydroxymethyltransferase (257 aa).

Residues Asp42 and Asp86 each coordinate Mg(2+). 3-methyl-2-oxobutanoate contacts are provided by residues 42-43 (DS), Asp86, and Lys116. A Mg(2+)-binding site is contributed by Glu118. Glu185 acts as the Proton acceptor in catalysis.

This sequence belongs to the PanB family. Homodecamer; pentamer of dimers. Mg(2+) is required as a cofactor.

The protein localises to the cytoplasm. The enzyme catalyses 3-methyl-2-oxobutanoate + (6R)-5,10-methylene-5,6,7,8-tetrahydrofolate + H2O = 2-dehydropantoate + (6S)-5,6,7,8-tetrahydrofolate. The protein operates within cofactor biosynthesis; (R)-pantothenate biosynthesis; (R)-pantoate from 3-methyl-2-oxobutanoate: step 1/2. In terms of biological role, catalyzes the reversible reaction in which hydroxymethyl group from 5,10-methylenetetrahydrofolate is transferred onto alpha-ketoisovalerate to form ketopantoate. The protein is 3-methyl-2-oxobutanoate hydroxymethyltransferase of Prochlorococcus marinus (strain AS9601).